A 484-amino-acid polypeptide reads, in one-letter code: Glutathione reductase (484 aa).

Ser-32 and Gly-33 together coordinate FAD. Residue Ser-32 coordinates glutathione. Glutathione is bound at residue Arg-39. FAD-binding residues include Glu-52, Thr-59, Cys-60, and Lys-68. Residues Cys-60 and Cys-65 are joined by a disulfide bond. Position 122 (Tyr-122) interacts with glutathione. Ala-138 is an FAD binding site. Residues Ala-204, Ile-207, Glu-210, Arg-227, and Arg-233 each contribute to the NADP(+) site. Residue Thr-242 participates in glutathione binding. NADP(+) is bound at residue Gly-293. Asp-333 contacts FAD. Residue Glu-339 coordinates NADP(+). Position 341 (Thr-341) interacts with FAD. Arg-349 is a glutathione binding site. Residue Val-374 coordinates NADP(+). Lys-426 contributes to the glutathione binding site. Residue His-473 coordinates FAD. His-473 serves as the catalytic Proton acceptor.

This sequence belongs to the class-I pyridine nucleotide-disulfide oxidoreductase family. In terms of assembly, homodimer. FAD is required as a cofactor.

Its subcellular location is the cytoplasm. It is found in the mitochondrion. The catalysed reaction is 2 glutathione + NADP(+) = glutathione disulfide + NADPH + H(+). In terms of biological role, catalyzes the reduction of glutathione disulfide (GSSG) to reduced glutathione (GSH). Constitutes the major mechanism to maintain a high GSH:GSSG ratio in the cytosol. The chain is Glutathione reductase (GLR1) from Kluyveromyces lactis (strain ATCC 8585 / CBS 2359 / DSM 70799 / NBRC 1267 / NRRL Y-1140 / WM37) (Yeast).